We begin with the raw amino-acid sequence, 1207 residues long: Brassinosteroid LRR receptor kinase (1207 aa).

Positions 1-34 (MKAHKTVFNQHPLSLNKLFFVLLLIFFLPPASPA) are cleaved as a signal peptide. A Cys pair 1 motif is present at residues 71–78 (CSFTGVSC). LRR repeat units follow at residues 109 to 131 (NLES…AKSQ), 135 to 157 (TLDS…SSFG), 161 to 181 (NLKS…EMLK), 186 to 207 (SLQV…PWVS), 213 to 234 (ELEF…LDFK), 235 to 257 (NLSY…KDCS), 258 to 280 (NLQH…LSSC), 282 to 304 (KLSF…PSES), 305 to 325 (LQYL…QLAD), 329 to 350 (TVVE…SLGE), 353 to 374 (SLEL…DTLS), 378 to 400 (NIKT…FSNL), 402 to 423 (KLET…GICK), 428 to 450 (NLKV…LSNC), 452 to 474 (QLVS…LGSL), 476 to 499 (KLKD…MYLQ), 500 to 523 (ALEN…SNCT), 524 to 547 (KLNW…GRLS), 548 to 570 (NLAI…LGNC), and 572 to 594 (SLIW…LFKQ). A glycan (N-linked (GlcNAc...) asparagine) is linked at Asn-119. N-linked (GlcNAc...) asparagine glycosylation is found at Asn-166 and Asn-196. Asn-235 and Asn-245 each carry an N-linked (GlcNAc...) asparagine glycan. A glycan (N-linked (GlcNAc...) asparagine) is linked at Asn-287. Residues Asn-339 and Asn-363 are each glycosylated (N-linked (GlcNAc...) asparagine). N-linked (GlcNAc...) asparagine glycosylation is found at Asn-412 and Asn-449. Asn-521 carries an N-linked (GlcNAc...) asparagine glycan. N-linked (GlcNAc...) asparagine glycans are attached at residues Asn-556, Asn-584, Asn-646, and Asn-662. LRR repeat units follow at residues 664–686 (SMIF…LGAM), 688–711 (YLSI…GGLK), 712–735 (NVAI…TSLT), and 736–758 (LLGE…APFD). Asn-724, Asn-746, and Asn-767 each carry an N-linked (GlcNAc...) asparagine glycan. The Cys pair 2 motif lies at 771 to 779 (CGYPLPIPC). A helical membrane pass occupies residues 803–823 (SVAMGLLFSLFCIFGLIIVAI). The region spanning 888–1163 (FHNDSLVGSG…IQVMAMFKEI (276 aa)) is the Protein kinase domain. ATP is bound by residues 894–902 (VGSGGFGDV) and Lys-916. The Proton acceptor role is filled by Asp-1014.

The protein belongs to the protein kinase superfamily. Ser/Thr protein kinase family.

It is found in the cell membrane. It catalyses the reaction L-seryl-[protein] + ATP = O-phospho-L-seryl-[protein] + ADP + H(+). It carries out the reaction L-threonyl-[protein] + ATP = O-phospho-L-threonyl-[protein] + ADP + H(+). Its function is as follows. Receptor with a serine/threonine-protein kinase activity. Regulates, in response to brassinosteroid binding, a signaling cascade involved in plant development, including expression of light- and stress-regulated genes, promotion of cell elongation, normal leaf and chloroplast senescence, and flowering. May be involved in a feedback regulation of brassinosteroid biosynthesis. May be also involved in the perception of systemin, a peptide hormone responsible for the systemic activation of defense genes in leaves of wounded plants. This chain is Brassinosteroid LRR receptor kinase (CURL3), found in Solanum lycopersicum (Tomato).